Reading from the N-terminus, the 263-residue chain is Metaxin-2 (263 aa).

Residue S2 is modified to N-acetylserine.

This sequence belongs to the metaxin family. In terms of assembly, interacts with MTX1/metaxin-1. Associates with the mitochondrial contact site and cristae organizing system (MICOS) complex, composed of at least MICOS10/MIC10, CHCHD3/MIC19, CHCHD6/MIC25, APOOL/MIC27, IMMT/MIC60, APOO/MIC23/MIC26 and QIL1/MIC13. This complex was also known under the names MINOS or MitOS complex. The MICOS complex associates with mitochondrial outer membrane proteins SAMM50, MTX1 and MTX2 (together described as components of the mitochondrial outer membrane sorting assembly machinery (SAM) complex) and DNAJC11, mitochondrial inner membrane protein TMEM11 and with HSPA9. The MICOS and SAM complexes together with DNAJC11 are part of a large protein complex spanning both membranes termed the mitochondrial intermembrane space bridging (MIB) complex.

The protein localises to the mitochondrion outer membrane. Its subcellular location is the mitochondrion. Functionally, involved in transport of proteins into the mitochondrion. In Homo sapiens (Human), this protein is Metaxin-2 (MTX2).